Here is a 143-residue protein sequence, read N- to C-terminus: Nucleoside diphosphate kinase (143 aa).

ATP contacts are provided by lysine 11, phenylalanine 59, arginine 87, threonine 93, arginine 104, and asparagine 114. Histidine 117 functions as the Pros-phosphohistidine intermediate in the catalytic mechanism.

Belongs to the NDK family. As to quaternary structure, homotetramer. Mg(2+) serves as cofactor.

The protein resides in the cytoplasm. It carries out the reaction a 2'-deoxyribonucleoside 5'-diphosphate + ATP = a 2'-deoxyribonucleoside 5'-triphosphate + ADP. It catalyses the reaction a ribonucleoside 5'-diphosphate + ATP = a ribonucleoside 5'-triphosphate + ADP. Functionally, major role in the synthesis of nucleoside triphosphates other than ATP. The ATP gamma phosphate is transferred to the NDP beta phosphate via a ping-pong mechanism, using a phosphorylated active-site intermediate. This Enterobacter sp. (strain 638) protein is Nucleoside diphosphate kinase.